The chain runs to 211 residues: Peptide methionine sulfoxide reductase MsrA (211 aa).

The active site involves cysteine 60.

Belongs to the MsrA Met sulfoxide reductase family.

The catalysed reaction is L-methionyl-[protein] + [thioredoxin]-disulfide + H2O = L-methionyl-(S)-S-oxide-[protein] + [thioredoxin]-dithiol. It catalyses the reaction [thioredoxin]-disulfide + L-methionine + H2O = L-methionine (S)-S-oxide + [thioredoxin]-dithiol. Functionally, has an important function as a repair enzyme for proteins that have been inactivated by oxidation. Catalyzes the reversible oxidation-reduction of methionine sulfoxide in proteins to methionine. The polypeptide is Peptide methionine sulfoxide reductase MsrA (Methanosarcina mazei (strain ATCC BAA-159 / DSM 3647 / Goe1 / Go1 / JCM 11833 / OCM 88) (Methanosarcina frisia)).